The chain runs to 623 residues: Prothrombin (623 aa).

An N-terminal signal peptide occupies residues 1 to 24 (MAHVGGLWLHGCLALAVLVSLVHS). The propeptide occupies 25 to 43 (QHVFMAPQQALSLLQRARR). The region spanning 44–90 (ANSGFFEEMRKGNLERECVEEQCSREEAYEALESPSETDAFWAKYTA) is the Gla domain. 10 positions are modified to 4-carboxyglutamate: Glu50, Glu51, Glu58, Glu60, Glu63, Glu64, Glu69, Glu70, Glu73, and Glu76. A disulfide bridge links Cys61 with Cys66. 11 disulfide bridges follow: Cys91–Cys104, Cys109–Cys187, Cys130–Cys170, Cys158–Cys182, Cys214–Cys292, Cys235–Cys275, Cys263–Cys287, Cys337–Cys483, Cys392–Cys408, Cys537–Cys551, and Cys565–Cys595. Kringle domains are found at residues 108-187 (NCAE…IPVC) and 213-292 (TCVP…LDYC). Asn120 and Asn144 each carry an N-linked (GlcNAc...) asparagine glycan. The 255-residue stretch at 365–619 (IVEGSDAEIG…LKKWMQKVID (255 aa)) folds into the Peptidase S1 domain. His407 functions as the Charge relay system in the catalytic mechanism. Asn417 is a glycosylation site (N-linked (GlcNAc...) asparagine). Asp463 serves as the catalytic Charge relay system. Residues 552 to 574 (AGYKPDEGKRGDACEGDSGGPFV) are high affinity receptor-binding region which is also known as the TP508 peptide. The active-site Charge relay system is Ser569.

It belongs to the peptidase S1 family. In terms of assembly, heterodimer (named alpha-thrombin) of a light and a heavy chain; disulfide-linked. Forms a heterodimer with SERPINA5. In plasma, interacts (via N-terminus) with alpha-1-microglobulin; this interaction does not prevent the activation of prothrombin to thrombin. The gamma-carboxyglutamyl residues, which bind calcium ions, result from the carboxylation of glutamyl residues by a microsomal enzyme, the vitamin K-dependent carboxylase. The modified residues are necessary for the calcium-dependent interaction with a negatively charged phospholipid surface, which is essential for the conversion of prothrombin to thrombin. In terms of processing, in the penultimate step of the coagulation cascade, prothrombin is converted to thrombin by the prothrombinase complex composed of factor Xa (F10), cofactor Va (F5), and phospholipids. This activation requires factor Xa-catalyzed sequential cleavage at 2 sites, Arg-315 and Arg-364, along 2 possible pathways. In the first pathway, the first cleavage occurs at Arg-315, leading to the formation of the inactive intermediate prethrombin-2. This pathway preferentially occurs on platelets and in the absence of cofactor Va. In the second pathway, the first cleavage occurs at Arg-364, which separates protease domain into 2 chains that remain connected through a disulfide bond and generates the active intermediate meizothrombin. The presence of cofactor Va directs activation along the meizothrombin pathway and greatly accelerates the rate of cleavage at Arg-364, but has a smaller effect on the cleavage of meizothrombin at Arg-315. Meizothrombin accumulates as an intermediate when prothrombinase is assembled on the membrane of red blood cells.

It catalyses the reaction Selective cleavage of Arg-|-Gly bonds in fibrinogen to form fibrin and release fibrinopeptides A and B.. Activity is promoted in the presence of negatively charged surfaces, such as polyphosphate and dextran sulfate. Inhibited by SERPINA5. In terms of biological role, thrombin, which cleaves bonds after Arg and Lys, converts fibrinogen to fibrin and activates factors V, VII, VIII, XIII, and, in complex with thrombomodulin, protein C. Functions in blood homeostasis, inflammation and wound healing. Activates coagulation factor XI (F11); activation is promoted by the contact with negatively charged surfaces. Triggers the production of pro-inflammatory cytokines, such as MCP-1/CCL2 and IL8/CXCL8, in endothelial cells. The protein is Prothrombin (F2) of Sus scrofa (Pig).